Here is a 119-residue protein sequence, read N- to C-terminus: Phosphoribosyl-AMP cyclohydrolase (119 aa).

Residue Asp78 participates in Mg(2+) binding. Cys79 contributes to the Zn(2+) binding site. Residues Asp80 and Asp82 each coordinate Mg(2+). Zn(2+) is bound by residues Cys95 and Cys102.

The protein belongs to the PRA-CH family. Homodimer. Mg(2+) is required as a cofactor. Zn(2+) serves as cofactor.

It is found in the cytoplasm. The catalysed reaction is 1-(5-phospho-beta-D-ribosyl)-5'-AMP + H2O = 1-(5-phospho-beta-D-ribosyl)-5-[(5-phospho-beta-D-ribosylamino)methylideneamino]imidazole-4-carboxamide. It functions in the pathway amino-acid biosynthesis; L-histidine biosynthesis; L-histidine from 5-phospho-alpha-D-ribose 1-diphosphate: step 3/9. Functionally, catalyzes the hydrolysis of the adenine ring of phosphoribosyl-AMP. This Jannaschia sp. (strain CCS1) protein is Phosphoribosyl-AMP cyclohydrolase.